A 221-amino-acid chain; its full sequence is MQAIILCGGLGTRLKSIIKDIPKPMAPINDKPFLEFIFEYLKKQGIKEVILAVSYKYEVIKEYFKDEFLGIKIKYSIEKEPLGTGGAIKETLKFVKNEAYVLNGDTFFDIDLSKLKLNESKICLALKQMNDFDRYGTVNVDEQDLVISFEEKVFKKQGLINGGIYLLTKDIFNDFALQEKFSFEEFLQENYKKLKARACIFDDYFIDIGVPEDYYHFLINN.

Belongs to the D-alpha-D-heptose-1-P guanylyltransferase family.

It carries out the reaction D-glycero-alpha-D-manno-heptose 1-phosphate + GTP + H(+) = GDP-D-glycero-alpha-D-manno-heptose + diphosphate. It participates in nucleotide-sugar biosynthesis; GDP-D-glycero-alpha-D-manno-heptose biosynthesis; GDP-D-glycero-alpha-D-manno-heptose from D-glycero-alpha-D-manno-heptose 7-phosphate: step 3/3. The protein operates within capsule biogenesis; capsule polysaccharide biosynthesis. In terms of biological role, catalyzes the GDP transfer from GTP to D-glycero-alpha-D-manno-heptose 1-phosphate, yielding GDP-D-alpha-D-heptose. Is able to use ATP, CTP or UTP as substrate in the presence of pyrophosphatase, but at a significantly slower rate. Can also form GDP-alpha-D-mannose from alpha-D-mannose 1-phosphate and GTP. In Campylobacter jejuni subsp. jejuni serotype O:2 (strain ATCC 700819 / NCTC 11168), this protein is D-glycero-alpha-D-manno-heptose 1-phosphate guanylyltransferase.